The sequence spans 407 residues: MGSDVRDMNLLPPVSSLSGNSSCNMPVSNSSQWAPVLDFPPGAPYSSLTPHSFIKQEPTWNPDPHEDQCLSAFTVHFSGQFTGTAGACRYGPFGAPTPSQATTGQARMFPNAPYLSNCLDNQQSMRNQGYSAVAFDGTPSYGHTPSHHTAQFTNHSFKHEDPISQQTSLGEQQYSVPPPVYGCHTPTDTCTGSQALLLRTPYNSDNLYQMECMTWNQMNLGSSLKSHGTTYENDSHSAPMLYSCGGQYRIHTHGVFRGIQDVRRVPGVTPAIVRSTEANEKRPFMCAYPGCNKRYFKLSHLQMHSRKHTGEKPYQCDFKDCERRFSRSDQLKRHQRRHTGVKPFQCKTCQRKFSRSDHLKTHTRTHTGEKPFSCRWPSCQKKFARSDELVRHHNMHQRNMTKLQLAL.

Residues lysine 55 and lysine 158 each participate in a glycyl lysine isopeptide (Lys-Gly) (interchain with G-Cter in SUMO) cross-link. The short motif at 213 to 221 is the 9aaTAD element; sequence MTWNQMNLG. C2H2-type zinc fingers lie at residues 284-308, 314-338, 344-366, and 372-396; these read FMCA…SRKH, YQCD…QRRH, FQCK…TRTH, and FSCR…HNMH. 2 important for interaction with target DNA regions span residues 328 to 342 and 354 to 362; these read SDQL…TGVK and SRSDHLKTH.

The protein belongs to the EGR C2H2-type zinc-finger protein family. As to expression, expressed in the pronephric anlage from stage 23 to 30. Also expressed in the adult kidney (mesonephros) and in testis.

The protein localises to the nucleus. The protein resides in the cytoplasm. It is found in the nucleus speckle. In terms of biological role, transcription factor required for development of the vascular component of the pronephric kidney, the glomus; may repress tubule-specific gene expression in the portion of the pronephros fated to form the glomus. Recognizes and binds to the DNA sequence 5'-GCG(T/G)GGGCG-3'. Inhibits Wnt-signaling during embryonic development. The protein is Wilms tumor protein homolog B (wt1-b) of Xenopus laevis (African clawed frog).